The primary structure comprises 192 residues: Signal peptidase complex catalytic subunit SEC11C (192 aa).

Topologically, residues 1-28 are cytoplasmic; that stretch reads MVRAGAVGAHLPASGLDIFGDLKKMNKR. Residues 29–48 traverse the membrane as a helical; Signal-anchor for type II membrane protein segment; the sequence is QLYYQVLNFAMIVSSALMIW. The Lumenal segment spans residues 49–192; that stretch reads KGLIVLTGSE…GAYVLLKRES (144 aa). Residues serine 68, histidine 108, and aspartate 134 each act as charge relay system in the active site. A C-terminal short (CTS) helix region spans residues 177-188; the sequence is ALLAVMGAYVLL.

This sequence belongs to the peptidase S26B family. Component of the signal peptidase complex paralog C (SPC-C) composed of a catalytic subunit SEC11C and three accessory subunits SPCS1, SPCS2 and SPCS3. Within the complex, interacts with SPCS2 and SPCS3. The complex induces a local thinning of the ER membrane which is used to measure the length of the signal peptide (SP) h-region of protein substrates. This ensures the selectivity of the complex towards h-regions shorter than 18-20 amino acids. May undergo processing at the N-terminus.

It is found in the endoplasmic reticulum membrane. The catalysed reaction is Cleavage of hydrophobic, N-terminal signal or leader sequences from secreted and periplasmic proteins.. Functionally, catalytic component of the signal peptidase complex (SPC) which catalyzes the cleavage of N-terminal signal sequences from nascent proteins as they are translocated into the lumen of the endoplasmic reticulum. Specifically cleaves N-terminal signal peptides that contain a hydrophobic alpha-helix (h-region) shorter than 18-20 amino acids. The polypeptide is Signal peptidase complex catalytic subunit SEC11C (SEC11C) (Homo sapiens (Human)).